Reading from the N-terminus, the 227-residue chain is 2,3-bisphosphoglycerate-dependent phosphoglycerate mutase (227 aa).

Substrate contacts are provided by residues 7–14, 20–21, arginine 59, 86–89, lysine 97, 113–114, and 182–183; these read RHGFSEWN, TG, ERHY, RR, and GN. Catalysis depends on histidine 8, which acts as the Tele-phosphohistidine intermediate. The active-site Proton donor/acceptor is glutamate 86.

It belongs to the phosphoglycerate mutase family. BPG-dependent PGAM subfamily. As to quaternary structure, homodimer.

It catalyses the reaction (2R)-2-phosphoglycerate = (2R)-3-phosphoglycerate. The protein operates within carbohydrate degradation; glycolysis; pyruvate from D-glyceraldehyde 3-phosphate: step 3/5. In terms of biological role, catalyzes the interconversion of 2-phosphoglycerate and 3-phosphoglycerate. This Haemophilus influenzae (strain PittGG) protein is 2,3-bisphosphoglycerate-dependent phosphoglycerate mutase.